Consider the following 255-residue polypeptide: Leucyl/phenylalanyl-tRNA--protein transferase (255 aa).

This sequence belongs to the L/F-transferase family.

It is found in the cytoplasm. The catalysed reaction is N-terminal L-lysyl-[protein] + L-leucyl-tRNA(Leu) = N-terminal L-leucyl-L-lysyl-[protein] + tRNA(Leu) + H(+). The enzyme catalyses N-terminal L-arginyl-[protein] + L-leucyl-tRNA(Leu) = N-terminal L-leucyl-L-arginyl-[protein] + tRNA(Leu) + H(+). It catalyses the reaction L-phenylalanyl-tRNA(Phe) + an N-terminal L-alpha-aminoacyl-[protein] = an N-terminal L-phenylalanyl-L-alpha-aminoacyl-[protein] + tRNA(Phe). Functionally, functions in the N-end rule pathway of protein degradation where it conjugates Leu, Phe and, less efficiently, Met from aminoacyl-tRNAs to the N-termini of proteins containing an N-terminal arginine or lysine. The sequence is that of Leucyl/phenylalanyl-tRNA--protein transferase from Burkholderia pseudomallei (strain 1106a).